A 469-amino-acid polypeptide reads, in one-letter code: ATP synthase subunit beta (469 aa).

153 to 160 (GGAGVGKT) lines the ATP pocket.

This sequence belongs to the ATPase alpha/beta chains family. As to quaternary structure, F-type ATPases have 2 components, CF(1) - the catalytic core - and CF(0) - the membrane proton channel. CF(1) has five subunits: alpha(3), beta(3), gamma(1), delta(1), epsilon(1). CF(0) has three main subunits: a(1), b(2) and c(9-12). The alpha and beta chains form an alternating ring which encloses part of the gamma chain. CF(1) is attached to CF(0) by a central stalk formed by the gamma and epsilon chains, while a peripheral stalk is formed by the delta and b chains.

It is found in the cell inner membrane. The catalysed reaction is ATP + H2O + 4 H(+)(in) = ADP + phosphate + 5 H(+)(out). In terms of biological role, produces ATP from ADP in the presence of a proton gradient across the membrane. The catalytic sites are hosted primarily by the beta subunits. This chain is ATP synthase subunit beta, found in Pseudothermotoga lettingae (strain ATCC BAA-301 / DSM 14385 / NBRC 107922 / TMO) (Thermotoga lettingae).